The primary structure comprises 452 residues: tRNA modification GTPase MnmE (452 aa).

3 residues coordinate (6S)-5-formyl-5,6,7,8-tetrahydrofolate: Arg21, Glu82, and Arg121. One can recognise a TrmE-type G domain in the interval 214-372 (GARVVLVGRP…LAKTIATTLL (159 aa)). Asn224 serves as a coordination point for K(+). Residues 224–229 (NVGKSS), 243–249 (TPIPGTT), 268–271 (DTAG), and 353–355 (SAR) each bind GTP. Ser228 lines the Mg(2+) pocket. 3 residues coordinate K(+): Thr243, Ile245, and Thr248. Thr249 is a binding site for Mg(2+). Lys452 is a binding site for (6S)-5-formyl-5,6,7,8-tetrahydrofolate.

The protein belongs to the TRAFAC class TrmE-Era-EngA-EngB-Septin-like GTPase superfamily. TrmE GTPase family. In terms of assembly, homodimer. Heterotetramer of two MnmE and two MnmG subunits. The cofactor is K(+).

Its subcellular location is the cytoplasm. Its function is as follows. Exhibits a very high intrinsic GTPase hydrolysis rate. Involved in the addition of a carboxymethylaminomethyl (cmnm) group at the wobble position (U34) of certain tRNAs, forming tRNA-cmnm(5)s(2)U34. This chain is tRNA modification GTPase MnmE, found in Chloroflexus aurantiacus (strain ATCC 29366 / DSM 635 / J-10-fl).